The sequence spans 253 residues: Chitooligosaccharide deacetylase (253 aa).

Mg(2+) contacts are provided by His61 and His126.

Belongs to the YdjC deacetylase family. ChbG subfamily. Homodimer. The cofactor is Mg(2+).

It is found in the cytoplasm. It catalyses the reaction N,N'-diacetylchitobiose + H2O = N-acetyl-beta-D-glucosaminyl-(1-&gt;4)-D-glucosamine + acetate. The catalysed reaction is diacetylchitobiose-6'-phosphate + H2O = N'-monoacetylchitobiose-6'-phosphate + acetate. It functions in the pathway glycan degradation; chitin degradation. Involved in the degradation of chitin. ChbG is essential for growth on the acetylated chitooligosaccharides chitobiose and chitotriose but is dispensable for growth on cellobiose and chitosan dimer, the deacetylated form of chitobiose. Deacetylation of chitobiose-6-P and chitotriose-6-P is necessary for both the activation of the chb promoter by the regulatory protein ChbR and the hydrolysis of phosphorylated beta-glucosides by the phospho-beta-glucosidase ChbF. Catalyzes the removal of only one acetyl group from chitobiose-6-P to yield monoacetylchitobiose-6-P, the inducer of ChbR and the substrate of ChbF. This Yersinia pseudotuberculosis serotype O:1b (strain IP 31758) protein is Chitooligosaccharide deacetylase.